Consider the following 99-residue polypeptide: Large ribosomal subunit protein eL21 (99 aa).

This sequence belongs to the eukaryotic ribosomal protein eL21 family.

The sequence is that of Large ribosomal subunit protein eL21 from Pyrobaculum calidifontis (strain DSM 21063 / JCM 11548 / VA1).